Reading from the N-terminus, the 307-residue chain is Undecaprenyl-diphosphatase (307 aa).

Transmembrane regions (helical) follow at residues 40-60, 79-99, 107-127, 183-203, 219-239, and 249-269; these read AAKTLDIVIQLGAVLAVVVYF, LRLALALAFAFLPAAVVGLLF, LFGPGPVAAALIVGGFLMIGV, AAAAEFSFLLAIPTLGAATVF, IVALVVGLAVSFAVALLVIAV, and LAPFGWYRIALGALVLWLWIA.

This sequence belongs to the UppP family.

Its subcellular location is the cell inner membrane. The catalysed reaction is di-trans,octa-cis-undecaprenyl diphosphate + H2O = di-trans,octa-cis-undecaprenyl phosphate + phosphate + H(+). Its function is as follows. Catalyzes the dephosphorylation of undecaprenyl diphosphate (UPP). Confers resistance to bacitracin. The chain is Undecaprenyl-diphosphatase from Sorangium cellulosum (strain So ce56) (Polyangium cellulosum (strain So ce56)).